Reading from the N-terminus, the 495-residue chain is Dihydrolipoyl dehydrogenase, mitochondrial (495 aa).

FAD-binding positions include 59 to 68 (EKNATLGGTC), Lys-77, and 169 to 171 (SGS). Cys-68 and Cys-73 are disulfide-bonded. NAD(+)-binding positions include 206 to 213 (GAGVIGLE), Glu-229, Val-264, and Gly-299. FAD contacts are provided by residues Asp-340 and 346–349 (MLAH). His-472 functions as the Proton acceptor in the catalytic mechanism.

It belongs to the class-I pyridine nucleotide-disulfide oxidoreductase family. FAD is required as a cofactor.

Its subcellular location is the mitochondrion matrix. The catalysed reaction is N(6)-[(R)-dihydrolipoyl]-L-lysyl-[protein] + NAD(+) = N(6)-[(R)-lipoyl]-L-lysyl-[protein] + NADH + H(+). The polypeptide is Dihydrolipoyl dehydrogenase, mitochondrial (dld-1) (Caenorhabditis elegans).